Here is a 393-residue protein sequence, read N- to C-terminus: Protein TsgA (393 aa).

The next 12 membrane-spanning stretches (helical) occupy residues 11 to 31 (WISFLSYALTGALVIVTGMVM), 51 to 71 (FLNAGILISIFLNAWLMEIVP), 78 to 98 (FGFILMVLAVAGLMFSHSLAL), 101 to 121 (AAMFVLGLVSGITMSIGTFLI), 134 to 154 (LLFTDSFFSMAGMIFPMVAAF), 162 to 182 (WYWVYACIGLVYLAIFILTFG), 206 to 226 (IGVLFLAVAALCYILGQLGFI), 245 to 265 (ALVSDFWMSYMFGMWAFSFIL), 273 to 293 (ILTVLAGMAAVLMYLFITGTQ), 298 to 318 (WFILTLGFFSSAIYTSIITLG), 332 to 352 (FILTCGTIGTMLTFVVTGPIV), and 361 to 381 (LLTANGLYAVVFVMCFALGFV).

The protein belongs to the major facilitator superfamily. TsgA family.

It is found in the cell inner membrane. The sequence is that of Protein TsgA from Salmonella dublin (strain CT_02021853).